A 134-amino-acid chain; its full sequence is Phosphoribosyl-AMP cyclohydrolase (134 aa).

A Mg(2+)-binding site is contributed by Asp-93. Cys-94 contributes to the Zn(2+) binding site. Residues Asp-95 and Asp-97 each coordinate Mg(2+). Cys-112 and Cys-119 together coordinate Zn(2+).

This sequence belongs to the PRA-CH family. Homodimer. Mg(2+) serves as cofactor. Requires Zn(2+) as cofactor.

It is found in the cytoplasm. It carries out the reaction 1-(5-phospho-beta-D-ribosyl)-5'-AMP + H2O = 1-(5-phospho-beta-D-ribosyl)-5-[(5-phospho-beta-D-ribosylamino)methylideneamino]imidazole-4-carboxamide. Its pathway is amino-acid biosynthesis; L-histidine biosynthesis; L-histidine from 5-phospho-alpha-D-ribose 1-diphosphate: step 3/9. Functionally, catalyzes the hydrolysis of the adenine ring of phosphoribosyl-AMP. This chain is Phosphoribosyl-AMP cyclohydrolase, found in Caulobacter sp. (strain K31).